The primary structure comprises 103 residues: NADH-quinone oxidoreductase subunit K (103 aa).

Helical transmembrane passes span 4–24, 28–48, and 64–84; these read LTSYAFVSMMLFSIGAIGVIA, IFVIYMSIEMMLNGINLFLIT, and MVISIAAAEAAIFLSVIILLF.

It belongs to the complex I subunit 4L family. In terms of assembly, NDH-1 is composed of 14 different subunits. Subunits NuoA, H, J, K, L, M, N constitute the membrane sector of the complex.

It localises to the cell inner membrane. The enzyme catalyses a quinone + NADH + 5 H(+)(in) = a quinol + NAD(+) + 4 H(+)(out). Its function is as follows. NDH-1 shuttles electrons from NADH, via FMN and iron-sulfur (Fe-S) centers, to quinones in the respiratory chain. The immediate electron acceptor for the enzyme in this species is believed to be ubiquinone. Couples the redox reaction to proton translocation (for every two electrons transferred, four hydrogen ions are translocated across the cytoplasmic membrane), and thus conserves the redox energy in a proton gradient. This chain is NADH-quinone oxidoreductase subunit K, found in Aliarcobacter butzleri (strain RM4018) (Arcobacter butzleri).